Consider the following 304-residue polypeptide: N-acetylmuramic acid 6-phosphate etherase (304 aa).

An SIS domain is found at 58–221 (IAERIHRGGR…STGVMIKLGK (164 aa)). Glu86 functions as the Proton donor in the catalytic mechanism. Glu117 is an active-site residue.

Belongs to the GCKR-like family. MurNAc-6-P etherase subfamily. Homodimer.

The catalysed reaction is N-acetyl-D-muramate 6-phosphate + H2O = N-acetyl-D-glucosamine 6-phosphate + (R)-lactate. The protein operates within amino-sugar metabolism; N-acetylmuramate degradation. Specifically catalyzes the cleavage of the D-lactyl ether substituent of MurNAc 6-phosphate, producing GlcNAc 6-phosphate and D-lactate. The sequence is that of N-acetylmuramic acid 6-phosphate etherase from Clostridium beijerinckii (strain ATCC 51743 / NCIMB 8052) (Clostridium acetobutylicum).